A 440-amino-acid chain; its full sequence is Cytochrome b (440 aa).

Residues isoleucine 46–valine 66 traverse the membrane as a helical segment. Heme b is bound by residues histidine 97 and histidine 111. 9 helical membrane-spanning segments follow: residues glycine 100 to serine 120, tryptophan 129 to leucine 149, phenylalanine 156 to isoleucine 176, phenylalanine 194 to tryptophan 214, leucine 253 to tyrosine 273, tryptophan 296 to valine 315, phenylalanine 330 to aspartate 350, tryptophan 365 to alanine 385, and leucine 394 to isoleucine 414. Residues histidine 198 and histidine 212 each coordinate heme b.

It belongs to the cytochrome b family. The main subunits of complex b-c1 are: cytochrome b, cytochrome c1 and the Rieske protein. The cofactor is heme b.

Its subcellular location is the cell membrane. In terms of biological role, component of the ubiquinol-cytochrome c reductase complex (complex III or cytochrome b-c1 complex), which is a respiratory chain that generates an electrochemical potential coupled to ATP synthesis. This Paracoccus denitrificans protein is Cytochrome b (petB).